The primary structure comprises 423 residues: Diaminobutyrate--2-oxoglutarate transaminase (423 aa).

Lys267 carries the N6-(pyridoxal phosphate)lysine modification.

It belongs to the class-III pyridoxal-phosphate-dependent aminotransferase family. As to quaternary structure, homohexamer. The cofactor is pyridoxal 5'-phosphate.

The catalysed reaction is L-2,4-diaminobutanoate + 2-oxoglutarate = L-aspartate 4-semialdehyde + L-glutamate. It functions in the pathway amine and polyamine biosynthesis; ectoine biosynthesis; L-ectoine from L-aspartate 4-semialdehyde: step 1/3. Functionally, catalyzes reversively the conversion of L-aspartate beta-semialdehyde (ASA) to L-2,4-diaminobutyrate (DABA) by transamination with L-glutamate. This chain is Diaminobutyrate--2-oxoglutarate transaminase (ectB), found in Chromohalobacter salexigens (strain ATCC BAA-138 / DSM 3043 / CIP 106854 / NCIMB 13768 / 1H11).